The primary structure comprises 169 residues: Sec-independent protein translocase protein TatB (169 aa).

The helical transmembrane segment at 1–21 threads the bilayer; sequence MFDIGFLELAVIAVIGLIVIG. Residues 98–169 are disordered; sequence EAEEAKLQTP…TTKTEPANDR (72 aa). The span at 134–143 shows a compositional bias: basic and acidic residues; sequence PPEEPSKVEA. Positions 146-169 are enriched in polar residues; that stretch reads SAETPQANNQDQQPTTKTEPANDR.

Belongs to the TatB family. As to quaternary structure, the Tat system comprises two distinct complexes: a TatABC complex, containing multiple copies of TatA, TatB and TatC subunits, and a separate TatA complex, containing only TatA subunits. Substrates initially bind to the TatABC complex, which probably triggers association of the separate TatA complex to form the active translocon.

Its subcellular location is the cell inner membrane. Its function is as follows. Part of the twin-arginine translocation (Tat) system that transports large folded proteins containing a characteristic twin-arginine motif in their signal peptide across membranes. Together with TatC, TatB is part of a receptor directly interacting with Tat signal peptides. TatB may form an oligomeric binding site that transiently accommodates folded Tat precursor proteins before their translocation. The protein is Sec-independent protein translocase protein TatB of Saccharophagus degradans (strain 2-40 / ATCC 43961 / DSM 17024).